Reading from the N-terminus, the 188-residue chain is Elongation factor P (188 aa).

Lys34 carries the post-translational modification N6-(3,6-diaminohexanoyl)-5-hydroxylysine.

This sequence belongs to the elongation factor P family. May be beta-lysylated on the epsilon-amino group of Lys-34 by the combined action of EpmA and EpmB, and then hydroxylated on the C5 position of the same residue by EpmC (if this protein is present). Lysylation is critical for the stimulatory effect of EF-P on peptide-bond formation. The lysylation moiety may extend toward the peptidyltransferase center and stabilize the terminal 3-CCA end of the tRNA. Hydroxylation of the C5 position on Lys-34 may allow additional potential stabilizing hydrogen-bond interactions with the P-tRNA.

Its subcellular location is the cytoplasm. Its pathway is protein biosynthesis; polypeptide chain elongation. Involved in peptide bond synthesis. Alleviates ribosome stalling that occurs when 3 or more consecutive Pro residues or the sequence PPG is present in a protein, possibly by augmenting the peptidyl transferase activity of the ribosome. Modification of Lys-34 is required for alleviation. In Vibrio campbellii (strain ATCC BAA-1116), this protein is Elongation factor P.